The following is a 151-amino-acid chain: Zinc finger HIT domain-containing protein 3 (151 aa).

Residues C11, C14, C22, C25, C30, C34, H38, and C42 each coordinate Zn(2+). Residues 11–42 (CVVCLEKPKYRCPTCRVPYCSVPCFQKHKEQC) form an HIT-type zinc finger. Residues 43–53 (SSEARPVEKRR) show a composition bias toward basic and acidic residues. The segment at 43-81 (SSEARPVEKRRAGPPVRSEESKDDDSSVADFLNSDEEED) is disordered. Residues 63–81 (SKDDDSSVADFLNSDEEED) show a composition bias toward acidic residues. A Phosphoserine modification is found at S76.

In terms of assembly, thyroid receptor interacting proteins (TRIPs) specifically interact with the ligand binding domain of the thyroid receptor (TR). Requires the presence of thyroid hormone for its interaction. Interacts with NUFIP1. Interacts (via HIT-type zinc finger) with the RUVBL1/RUVBL2 complex in the presence of ADP. In terms of tissue distribution, expressed in the cerebellum.

The protein localises to the cytoplasm. The protein resides in the nucleus. This is Zinc finger HIT domain-containing protein 3 (Znhit3) from Mus musculus (Mouse).